Reading from the N-terminus, the 500-residue chain is NF-kappa-B inhibitor cactus (500 aa).

The segment covering 1-43 (MPSPTKAAEAATKATATSDCSCSAASVEQRAPSNAANPSSSLA) has biased composition (low complexity). 2 disordered regions span residues 1–148 (MPSP…MRLK) and 171–212 (LNNL…APPS). Ser45 is subject to Phosphoserine; by PKC. The segment covering 69–86 (NETSDSGFISGPQSSQIF) has biased composition (polar residues). Residues 118–130 (IIDEEEDQEEQEK) are compositionally biased toward acidic residues. Ser144 carries the post-translational modification Phosphoserine; by PKC. Over residues 171-189 (LNNLGQSSSTQITGRSKVQ) the composition is skewed to polar residues. Phosphothreonine; by PKC is present on Thr183. Residues 190-212 (SSTASTANANPSGSGATSSAPPS) show a composition bias toward low complexity. 5 ANK repeats span residues 229–261 (DGDT…LLNI), 265–294 (VAQT…EPTV), 298–327 (HGNT…ATEI), 361–390 (DGER…DINA), and 395–424 (SGRT…KLNL). Thr293 and Thr319 each carry phosphothreonine; by PKC. Ser395 bears the Phosphoserine; by PKC mark.

This sequence belongs to the NF-kappa-B inhibitor family. Phosphorylated isoform A binds to dorsal (dl); inhibits dl translocation to the nucleus and therefore from binding to DNA. In vitro, interacts with IKKbeta. Interacts with cactin and kappa-B-Ras. Activated IKKbeta phosphorylates cact. As to expression, expressed in ovary (at protein level).

It is found in the cytoplasm. Functionally, involved in the formation of the dorsoventral pattern. It inhibits nuclear translocation of the dorsal morphogen in the dorsal region of the embryo. Acts as a negative regulator of the NF-kappa-B (rel) signaling pathway. Cact is degraded by IKKbeta, this is essential for NF-kappa-B (rel) activation. The sequence is that of NF-kappa-B inhibitor cactus (cact) from Drosophila melanogaster (Fruit fly).